The following is a 298-amino-acid chain: Isochorismatase domain-containing protein 1 (298 aa).

At Tyr-160 the chain carries Phosphotyrosine. Residue Lys-279 is modified to N6-succinyllysine.

Belongs to the isochorismatase family.

The sequence is that of Isochorismatase domain-containing protein 1 (ISOC1) from Homo sapiens (Human).